The following is a 617-amino-acid chain: Probable Xaa-Pro aminopeptidase P (617 aa).

4 residues coordinate Mn(2+): Asp-414, Asp-425, Glu-523, and Glu-537.

It belongs to the peptidase M24B family. Mn(2+) serves as cofactor.

The catalysed reaction is Release of any N-terminal amino acid, including proline, that is linked to proline, even from a dipeptide or tripeptide.. Catalyzes the removal of a penultimate prolyl residue from the N-termini of peptides. The chain is Probable Xaa-Pro aminopeptidase P (AMPP) from Blastomyces gilchristii (strain SLH14081) (Blastomyces dermatitidis).